Here is a 3564-residue protein sequence, read N- to C-terminus: CUB and sushi domain-containing protein 1 (3564 aa).

The signal sequence occupies residues 1 to 29; that stretch reads MTAWRKFKSLLLPLVLAVLCAGLLTAAKG. Topologically, residues 30–3487 are extracellular; that stretch reads QNCGGLVQGP…NHYQGTSSGS (3458 aa). 10 disulfide bridges follow: cysteine 32-cysteine 58, cysteine 145-cysteine 185, cysteine 171-cysteine 202, cysteine 208-cysteine 234, cysteine 349-cysteine 389, cysteine 375-cysteine 406, cysteine 411-cysteine 437, cysteine 527-cysteine 567, cysteine 553-cysteine 580, and cysteine 584-cysteine 610. Residues 32 to 140 form the CUB 1 domain; the sequence is CGGLVQGPNG…QGFKAMYEVL (109 aa). Asparagine 40 and asparagine 57 each carry an N-linked (GlcNAc...) asparagine glycan. Residues 143–204 form the Sushi 1 domain; it reads HTCGNPGEIL…WDFPAPFCRA (62 aa). The CUB 2 domain occupies 208 to 312; sequence CGGTLRGTSG…KGFNAQFQVK (105 aa). In terms of domain architecture, Sushi 2 spans 347–408; the sequence is DMCPDPGIPD…WNDHRPICRA (62 aa). Residues 411–522 form the CUB 3 domain; the sequence is CGSNLRGPSG…PGFKAVYQEI (112 aa). In terms of domain architecture, Sushi 3 spans 525 to 582; it reads GGCGDPGIPAYGKRTGSSFLHGDTLTFECQAAFELVGERVITCQKNNQWSGNKPSCVF. One can recognise a CUB 4 domain in the interval 584–692; that stretch reads CFFNFTAPSG…RGFNITYTTF (109 aa). Residues asparagine 587 and asparagine 686 are each glycosylated (N-linked (GlcNAc...) asparagine). The Sushi 4 domain maps to 695–756; the sequence is NECHDPGIPV…WSSTVPRCEA (62 aa). Cystine bridges form between cysteine 697–cysteine 738, cysteine 723–cysteine 754, cysteine 758–cysteine 784, cysteine 873–cysteine 913, cysteine 899–cysteine 926, and cysteine 930–cysteine 956. Residues 758 to 866 enclose the CUB 5 domain; it reads CGGHLTASSG…VGFLIHYESV (109 aa). The 58-residue stretch at 871-928 folds into the Sushi 5 domain; the sequence is DSCLDPGIPVNGQRHGSNFGIRSTVTFSCDPGYTLSDDEPLVCEKNHQWNHALPSCDA. Residues 930 to 1040 enclose the CUB 6 domain; it reads CGGYIHGKSG…EGFNITFAEY (111 aa). Residues asparagine 955, asparagine 1015, and asparagine 1034 are each glycosylated (N-linked (GlcNAc...) asparagine). Positions 1043-1102 constitute a Sushi 6 domain; the sequence is EPCDDPGVPAFSRRIGFQFGVGDTLAFTCFQGYRLEGATKLTCLGGGRRVWSAPLPRCVA. Cystine bridges form between cysteine 1045/cysteine 1085, cysteine 1071/cysteine 1100, and cysteine 1104/cysteine 1130. The CUB 7 domain occupies 1104–1212; that stretch reads CGASVKGNEG…QGFQLTYTSF (109 aa). N-linked (GlcNAc...) asparagine glycans are attached at residues asparagine 1184 and asparagine 1197. In terms of domain architecture, Sushi 7 spans 1215 to 1275; that stretch reads VKCEDPGIPN…WDKPMPSCVA (61 aa). 12 disulfide bridges follow: cysteine 1217–cysteine 1258, cysteine 1244–cysteine 1273, cysteine 1277–cysteine 1304, cysteine 1391–cysteine 1431, cysteine 1417–cysteine 1447, cysteine 1451–cysteine 1477, cysteine 1564–cysteine 1604, cysteine 1590–cysteine 1621, cysteine 1625–cysteine 1651, cysteine 1741–cysteine 1781, cysteine 1767–cysteine 1798, and cysteine 1802–cysteine 1828. The CUB 8 domain occupies 1277 to 1386; the sequence is CGGLVHAATS…SGFSIQFSTS (110 aa). One can recognise a Sushi 8 domain in the interval 1389 to 1449; the sequence is STCNDPGMPQ…WQPDPPSCIA (61 aa). A glycan (N-linked (GlcNAc...) asparagine) is linked at asparagine 1399. The region spanning 1451 to 1559 is the CUB 9 domain; that stretch reads CGGNLTGPAG…SGFAIEFKEK (109 aa). Asparagine 1454 and asparagine 1572 each carry an N-linked (GlcNAc...) asparagine glycan. Residues 1562 to 1623 form the Sushi 9 domain; it reads EACFDPGNIM…WDRALPACQA (62 aa). The CUB 10 domain maps to 1625 to 1733; it reads CGGQYTGSEG…RGFHFVYQAV (109 aa). N-linked (GlcNAc...) asparagine glycosylation occurs at asparagine 1644. One can recognise a Sushi 10 domain in the interval 1739–1800; sequence TQCSSVPEPR…WNDTIPSCVV (62 aa). Residues asparagine 1792, asparagine 1805, and asparagine 1882 are each glycosylated (N-linked (GlcNAc...) asparagine). The CUB 11 domain maps to 1802-1910; that stretch reads CSGNFTQRRG…AGFHLEYKTV (109 aa). In terms of domain architecture, Sushi 11 spans 1913-1972; it reads AACQEPALPSNGIKIGDRYMVNDVLSFQCEPGYTLQGRSHISCMPGTVRRWNYPSPLCIA. Intrachain disulfides connect cysteine 1915-cysteine 1955, cysteine 1941-cysteine 1970, and cysteine 1974-cysteine 2000. The 109-residue stretch at 1974–2082 folds into the CUB 12 domain; that stretch reads CGGTLTSMSG…QGFKLSYQAY (109 aa). Asparagine 2018 is a glycosylation site (N-linked (GlcNAc...) asparagine). The region spanning 2085–2144 is the Sushi 12 domain; sequence QNCPDPPAFQNGFMINSDYSVGQSISFECYPGYILLGHPVLTCQHGTDRNWNYPFPRCDA. Cystine bridges form between cysteine 2087–cysteine 2127, cysteine 2113–cysteine 2142, and cysteine 2146–cysteine 2172. A CUB 13 domain is found at 2146 to 2257; sequence CGYNVTSQNG…LNFHAFQLKR (112 aa). Residues asparagine 2149, asparagine 2154, and asparagine 2187 are each glycosylated (N-linked (GlcNAc...) asparagine). The Sushi 13 domain maps to 2256–2317; it reads KRCPPPPAVP…FQGSPPTCEA (62 aa). Intrachain disulfides connect cysteine 2258-cysteine 2300, cysteine 2286-cysteine 2315, and cysteine 2319-cysteine 2347. Residues 2319–2430 form the CUB 14 domain; sequence CPANEVRTES…KGFKIRYAAP (112 aa). N-linked (GlcNAc...) asparagine glycans are attached at residues asparagine 2358, asparagine 2394, asparagine 2400, asparagine 2445, asparagine 2470, and asparagine 2503. 15 Sushi domains span residues 2430–2492, 2493–2554, 2555–2619, 2620–2677, 2678–2735, 2736–2793, 2794–2856, 2857–2914, 2918–2975, 2976–3034, 3035–3094, 3095–3152, 3153–3210, 3214–3272, and 3273–3332; these read PYCS…LCQA, VSCG…TCKP, VPCP…RCKV, ISCG…RCLA, GHCG…VCVP, ITCG…ICRV, VNCS…KCLA, ISCG…HCSG, GFCG…VCEA, VSCG…DCTI, ISCG…LCKA, VLCN…QCLP, VFCG…TCID, TACP…ECIP, and HACR…VCKS. Cystine bridges form between cysteine 2432-cysteine 2473, cysteine 2459-cysteine 2490, cysteine 2495-cysteine 2537, cysteine 2521-cysteine 2552, cysteine 2557-cysteine 2602, cysteine 2588-cysteine 2617, cysteine 2622-cysteine 2662, cysteine 2648-cysteine 2675, cysteine 2680-cysteine 2720, cysteine 2706-cysteine 2733, cysteine 2738-cysteine 2778, and cysteine 2764-cysteine 2791. Asparagine 2605 carries N-linked (GlcNAc...) asparagine glycosylation. Asparagine 2750 and asparagine 2761 each carry an N-linked (GlcNAc...) asparagine glycan. A glycan (N-linked (GlcNAc...) asparagine) is linked at asparagine 2795. 18 disulfides stabilise this stretch: cysteine 2796/cysteine 2841, cysteine 2827/cysteine 2854, cysteine 2859/cysteine 2899, cysteine 2885/cysteine 2912, cysteine 2920/cysteine 2960, cysteine 2946/cysteine 2973, cysteine 2978/cysteine 3019, cysteine 3005/cysteine 3032, cysteine 3037/cysteine 3079, cysteine 3063/cysteine 3092, cysteine 3097/cysteine 3137, cysteine 3123/cysteine 3150, cysteine 3155/cysteine 3195, cysteine 3181/cysteine 3208, cysteine 3216/cysteine 3257, cysteine 3243/cysteine 3270, cysteine 3275/cysteine 3317, and cysteine 3302/cysteine 3330. Asparagine 2894 is a glycosylation site (N-linked (GlcNAc...) asparagine). The N-linked (GlcNAc...) asparagine glycan is linked to asparagine 2963. 3 N-linked (GlcNAc...) asparagine glycosylation sites follow: asparagine 3022, asparagine 3056, and asparagine 3086. Asparagine 3228 and asparagine 3260 each carry an N-linked (GlcNAc...) asparagine glycan. N-linked (GlcNAc...) asparagine glycosylation is found at asparagine 3339, asparagine 3379, and asparagine 3386. A helical transmembrane segment spans residues 3488 to 3508; it reads VAAAILVPFFALILSGFAFYL. Over 3509–3564 the chain is Cytoplasmic; the sequence is YKHRTRPKVQYNGYAGHENSNGQASFENPMYDTNLKPTEAKAVRFDTTLNTVCTVV.

This sequence belongs to the CSMD family.

Its subcellular location is the membrane. This Mus musculus (Mouse) protein is CUB and sushi domain-containing protein 1 (Csmd1).